The primary structure comprises 427 residues: Inward rectifier potassium channel 2 (427 aa).

The Cytoplasmic segment spans residues 1 to 81; that stretch reads MGSVRTNRYS…IFTTCVDIRW (81 aa). Cys76 is subject to S-nitrosocysteine. The helical transmembrane segment at 82-106 threads the bilayer; sequence RWMLVIFCLAFVLSWLFFGCVFWLI. Residues 107-128 are Extracellular-facing; that stretch reads ALLHGDLDASRESKACVSEVNS. The segment at residues 129-140 is an intramembrane region (helical; Pore-forming); the sequence is FTAAFLFSIETQ. An intramembrane region (pore-forming) is located at residues 141 to 147; that stretch reads TTIGYGF. Positions 142–147 match the Selectivity filter motif; that stretch reads TIGYGF. Residues 148–156 are Extracellular-facing; the sequence is RCVTDECPV. Residues 157-178 traverse the membrane as a helical segment; it reads AVFMVVFQSIVGCIIDAFIIGA. At 179–427 the chain is on the cytoplasmic side; the sequence is VMAKMAKPKK…PRPLRRESEI (249 aa). The tract at residues 181-208 is polyphosphoinositide (PIP2)-binding; it reads AKMAKPKKRNETLVFSHNAVIAMRDGKL. The segment at 384–427 is disordered; it reads SKEEDDSENGVPESTSTDTPPDIDLHNQASVPLEPRPLRRESEI. The PDZ-binding motif lies at 425–427; it reads SEI.

The protein belongs to the inward rectifier-type potassium channel (TC 1.A.2.1) family. KCNJ2 subfamily. Homotetramer. Homomultimeric and heteromultimeric association with KCNJ4/Kir2.3. Can form heteromeric channels with Kir2.6/KCNJ18. Associates, via its PDZ-recognition domain, with a complex containing LIN7A, LIN7B, LIN7C, DLG1, CASK and APBA1. In terms of processing, S-nitrosylation increases the open probability and inward rectifying currents. Highly expressed in the ventricle and skeletal muscle, moderately in cerebrum and cerebellum. Only low levels are detected in kidney or lung.

The protein resides in the cell membrane. Its subcellular location is the sarcolemma. The protein localises to the T-tubule. The catalysed reaction is K(+)(in) = K(+)(out). Activated by phosphatidylinositol 4,5 biphosphate (PtdIns(4,5)P2). Its function is as follows. Inward rectifier potassium channels are characterized by a greater tendency to allow potassium to flow into the cell rather than out of it. Their voltage dependence is regulated by the concentration of extracellular potassium; as external potassium is raised, the voltage range of the channel opening shifts to more positive voltages. The inward rectification is mainly due to the blockage of outward current by internal magnesium. Can be blocked by extracellular barium and cesium. Probably participates in establishing action potential waveform and excitability of neuronal and muscle tissues. This Oryctolagus cuniculus (Rabbit) protein is Inward rectifier potassium channel 2 (KCNJ2).